Consider the following 239-residue polypeptide: Geranylgeranylglyceryl phosphate synthase (239 aa).

2 residues coordinate Mg(2+): aspartate 18 and serine 45. Sn-glycerol 1-phosphate is bound by residues 166–172 (YLEAGSG), 197–198 (GG), and 219–220 (GT).

Belongs to the GGGP/HepGP synthase family. Group II subfamily. Mg(2+) is required as a cofactor.

The protein localises to the cytoplasm. The enzyme catalyses sn-glycerol 1-phosphate + (2E,6E,10E)-geranylgeranyl diphosphate = sn-3-O-(geranylgeranyl)glycerol 1-phosphate + diphosphate. It functions in the pathway membrane lipid metabolism; glycerophospholipid metabolism. In terms of biological role, prenyltransferase that catalyzes the transfer of the geranylgeranyl moiety of geranylgeranyl diphosphate (GGPP) to the C3 hydroxyl of sn-glycerol-1-phosphate (G1P). This reaction is the first ether-bond-formation step in the biosynthesis of archaeal membrane lipids. The polypeptide is Geranylgeranylglyceryl phosphate synthase (Pyrobaculum arsenaticum (strain DSM 13514 / JCM 11321 / PZ6)).